A 483-amino-acid chain; its full sequence is Argininosuccinate lyase (483 aa).

Belongs to the lyase 1 family. Argininosuccinate lyase subfamily.

The protein resides in the cytoplasm. It carries out the reaction 2-(N(omega)-L-arginino)succinate = fumarate + L-arginine. Its pathway is amino-acid biosynthesis; L-arginine biosynthesis; L-arginine from L-ornithine and carbamoyl phosphate: step 3/3. The protein is Argininosuccinate lyase of Archaeoglobus fulgidus (strain ATCC 49558 / DSM 4304 / JCM 9628 / NBRC 100126 / VC-16).